Consider the following 572-residue polypeptide: Proline--tRNA ligase (572 aa).

It belongs to the class-II aminoacyl-tRNA synthetase family. ProS type 1 subfamily. As to quaternary structure, homodimer.

The protein resides in the cytoplasm. It carries out the reaction tRNA(Pro) + L-proline + ATP = L-prolyl-tRNA(Pro) + AMP + diphosphate. In terms of biological role, catalyzes the attachment of proline to tRNA(Pro) in a two-step reaction: proline is first activated by ATP to form Pro-AMP and then transferred to the acceptor end of tRNA(Pro). As ProRS can inadvertently accommodate and process non-cognate amino acids such as alanine and cysteine, to avoid such errors it has two additional distinct editing activities against alanine. One activity is designated as 'pretransfer' editing and involves the tRNA(Pro)-independent hydrolysis of activated Ala-AMP. The other activity is designated 'posttransfer' editing and involves deacylation of mischarged Ala-tRNA(Pro). The misacylated Cys-tRNA(Pro) is not edited by ProRS. This chain is Proline--tRNA ligase, found in Yersinia pestis (strain Pestoides F).